A 458-amino-acid polypeptide reads, in one-letter code: MTDTRIERDSMGELAVPATALYGAQTQRAVNNFPVSGQRMPQAFVRALLLAKAAAARANVSLQQLDAPMGEAIADTCLQLLQEDFMQHFPVDVFQTGSGTSSNMNANEVVATLASRRLGGKVNPNDHVNCGQSSNDIIPSTIHISAALEISERLLPALRHLEQTIQSKAGEVHAYVKTGRTHLMDAMPVRMSQVLGGWAQQVRQAGVHIESVLPALQQLAQGGTAVGTGINAHPRFAERFSQELNDLTGLAFRPGDDFFALIGSQDTAVAASGQLKTLAVTLMKLANDLRWMNSGPLAGLGEIELEALQPGSSIMPGKVNPVIPEATAMVAAQVIGNDAAIAVAGQSGNFELNVMLPLVADNLLHSIQLLANVSRLLADKAIASFKVNQGKLSEALARNPILVTALNPIIGYQKAAEIAKQAYREGRPIIDVALENTDLDRARLEVLLDPEKLTAGGL.

Substrate contacts are provided by residues 98 to 100 (SGT), 123 to 126 (NPND), 133 to 135 (SSN), and Thr-181. The Proton donor/acceptor role is filled by His-182. Ser-312 is an active-site residue. Substrate is bound by residues Ser-313 and 318–320 (KVN).

It belongs to the class-II fumarase/aspartase family. Fumarase subfamily. In terms of assembly, homotetramer.

The protein resides in the cytoplasm. It carries out the reaction (S)-malate = fumarate + H2O. It participates in carbohydrate metabolism; tricarboxylic acid cycle; (S)-malate from fumarate: step 1/1. Involved in the TCA cycle. Catalyzes the stereospecific interconversion of fumarate to L-malate. This chain is Fumarate hydratase class II 2, found in Pseudomonas aeruginosa (strain ATCC 15692 / DSM 22644 / CIP 104116 / JCM 14847 / LMG 12228 / 1C / PRS 101 / PAO1).